The primary structure comprises 267 residues: Interleukin-15 receptor subunit alpha (267 aa).

The first 30 residues, 1–30 (MAPRRARGCRTLGLPALLLLLLLRPPATRG), serve as a signal peptide directing secretion. Residues 31-95 (ITCPPPMSVE…WTTPSLKCIR (65 aa)) enclose the Sushi domain. At 31–205 (ITCPPPMSVE…VYPQGHSDTT (175 aa)) the chain is on the extracellular side. 2 disulfide bridges follow: C33/C75 and C59/C93. A disordered region spans residues 102-178 (QRPAPPSTVT…ESSHGTPSQT (77 aa)). Residues 108-124 (STVTTAGVTPQPESLSP) are compositionally biased toward polar residues. Residues 129-145 (PAASSPSSNNTAATTAA) are compositionally biased toward low complexity. A glycan (N-linked (GlcNAc...) asparagine) is linked at N137. Positions 152-165 (LMPSKSPSTGTTEI) are enriched in polar residues. The chain crosses the membrane as a helical span at residues 206–228 (VAISTSTVLLCGLSAVSLLACYL). The Cytoplasmic portion of the chain corresponds to 229–267 (KSRQTPPLASVEMEAMEALPVTWGTSSRDEDLENCSHHL).

As to quaternary structure, the interleukin-15 receptor IL15R is a heterotrimer of IL15RA, IL2RB and IL2RG. IL15RA also self-associates. Interacts with SYK. Post-translationally, N-glycosylated and O-glycosylated. A soluble form (sIL-15RA) arises from proteolytic shedding of the membrane-anchored receptor. It also binds IL-15 and thus interferes with IL-15 binding to the membrane receptor. In terms of tissue distribution, expressed in neutrophils (at protein level). Expressed in fetal brain with higher expression in the hippocampus and cerebellum than in cortex and thalamus. Higher levels of soluble sIL-15RA form in comparison with membrane-bound forms is present in all brain structures. Isoforms 1, 3, 4, 5, 6, 7, 8 and 9: Widely expressed.

The protein localises to the membrane. The protein resides in the nucleus membrane. It is found in the cell surface. Its subcellular location is the endoplasmic reticulum membrane. It localises to the golgi apparatus membrane. The protein localises to the cytoplasmic vesicle membrane. The protein resides in the secreted. It is found in the extracellular space. In terms of biological role, high-affinity receptor for interleukin-15. Can signal both in cis and trans where IL15R from one subset of cells presents IL15 to neighboring IL2RG-expressing cells. In neutrophils, binds and activates kinase SYK in response to IL15 stimulation. In neutrophils, required for IL15-induced phagocytosis in a SYK-dependent manner. Expression of different isoforms may alter or interfere with signal transduction. Functionally, does not bind IL15. The sequence is that of Interleukin-15 receptor subunit alpha (IL15RA) from Homo sapiens (Human).